The sequence spans 101 residues: NAD(P)H-quinone oxidoreductase subunit 4L, chloroplastic (101 aa).

3 helical membrane-spanning segments follow: residues 2–22 (MLEH…YGLI), 32–52 (MCLE…SDFF), and 61–81 (IFSI…LAIV).

It belongs to the complex I subunit 4L family. In terms of assembly, NDH is composed of at least 16 different subunits, 5 of which are encoded in the nucleus.

It is found in the plastid. Its subcellular location is the chloroplast thylakoid membrane. The enzyme catalyses a plastoquinone + NADH + (n+1) H(+)(in) = a plastoquinol + NAD(+) + n H(+)(out). It catalyses the reaction a plastoquinone + NADPH + (n+1) H(+)(in) = a plastoquinol + NADP(+) + n H(+)(out). NDH shuttles electrons from NAD(P)H:plastoquinone, via FMN and iron-sulfur (Fe-S) centers, to quinones in the photosynthetic chain and possibly in a chloroplast respiratory chain. The immediate electron acceptor for the enzyme in this species is believed to be plastoquinone. Couples the redox reaction to proton translocation, and thus conserves the redox energy in a proton gradient. The chain is NAD(P)H-quinone oxidoreductase subunit 4L, chloroplastic from Panax ginseng (Korean ginseng).